The sequence spans 228 residues: ATP-dependent dethiobiotin synthetase BioD (228 aa).

13 to 18 provides a ligand contact to ATP; it reads DVGKTV. Residue Thr17 coordinates Mg(2+). Lys38 is a catalytic residue. ATP-binding positions include Asp55, 116–119, 176–177, and 205–207; these read EGAG, NR, and PYI. Mg(2+)-binding residues include Asp55 and Glu116.

Belongs to the dethiobiotin synthetase family. Homodimer. It depends on Mg(2+) as a cofactor.

Its subcellular location is the cytoplasm. The catalysed reaction is (7R,8S)-7,8-diammoniononanoate + CO2 + ATP = (4R,5S)-dethiobiotin + ADP + phosphate + 3 H(+). It functions in the pathway cofactor biosynthesis; biotin biosynthesis; biotin from 7,8-diaminononanoate: step 1/2. Functionally, catalyzes a mechanistically unusual reaction, the ATP-dependent insertion of CO2 between the N7 and N8 nitrogen atoms of 7,8-diaminopelargonic acid (DAPA, also called 7,8-diammoniononanoate) to form a ureido ring. This is ATP-dependent dethiobiotin synthetase BioD from Vibrio parahaemolyticus serotype O3:K6 (strain RIMD 2210633).